Consider the following 345-residue polypeptide: MRWKRTLQLLDVHCEGEIGRVVTGGAPKIPGNTVAEQLHWMNTDPQGEALRRFLTLEPRGTPMGSVDLLLPPKHPDAHAAFVILQPDQAHASSGSNSICATTALLESGMVEMQEPETVIILETAAGLVKATATCRDGRCEKVKLTMVPSFVHELDVSIDTPEWGRVTMDISYGGIFYALVDVRQIGLTIEKANAAKLVAAGMTLKDLVNREMTVVHPEIPAISGVAYVMFRDVDADGSIRTCTTMWPGRADRSPCGTGNSANLATLYARGKVKVGDEYKSRSIIGSEFDVGLSAVTEVAGRPAVIPTIAGRGFTFGLHQVGLDPFDPLGDGFAMTDVWGPEAGNI.

Gln-85 is a binding site for substrate. The active-site Proton acceptor is the Ser-93. Residues 94–95 (GS) and Asp-251 each bind substrate. Catalysis depends on Cys-255, which acts as the Proton donor. Substrate is bound at residue 256-257 (GT).

Belongs to the proline racemase family.

It catalyses the reaction trans-4-hydroxy-L-proline = cis-4-hydroxy-D-proline. In terms of biological role, catalyzes the epimerization of trans-4-hydroxy-L-proline (t4LHyp) to cis-4-hydroxy-D-proline (c4DHyp). May be involved in a degradation pathway of t4LHyp, which would allow A.tumefaciens to grow on t4LHyp as a sole carbon source. Can also catalyze the epimerization of trans-3-hydroxy-L-proline (t3LHyp) to cis-3-hydroxy-D-proline (c3DHyp) in vitro. Displays no proline racemase activity. The protein is 4-hydroxyproline 2-epimerase of Agrobacterium fabrum (strain C58 / ATCC 33970) (Agrobacterium tumefaciens (strain C58)).